Here is a 295-residue protein sequence, read N- to C-terminus: MTDLITVKKLGSRIGAQIDGVRLGGDLDPAAVNEIRAALLAHKVVFFRGQHQLDDAEQLAFAGLLGTPIGHPAAIALADDAPIITPINSEFGKANRWHTDVTFAANYPAASVLRAVSLPSYGGSTLWANTAAAYAELPEPLKCLTENLWALHTNRYDYVTTKPLTAAQRAFRQVFEKPDFRTEHPVVRVHPETGERTLLAGDFVRSFVGLDSHESRVLFEVLQRRITMPENTIRWNWAPGDVAIWDNRATQHRAIDDYDDQHRLMHRVTLMGDVPVDVYGQASRVISGAPMEIAG.

His71 contributes to the substrate binding site. Residues His98 and Asp100 each coordinate Fe cation. Val101 serves as a coordination point for substrate. A 2-oxoglutarate-binding site is contributed by Thr125. His252 contacts Fe cation. The 2-oxoglutarate site is built by Arg263 and Arg267.

The protein belongs to the TfdA dioxygenase family. Requires Fe(2+) as cofactor.

It catalyses the reaction a primary linear alkyl sulfate ester + 2-oxoglutarate + O2 = an aldehyde + sulfate + succinate + CO2 + H(+). The enzyme catalyses 2-ethylhexyl sulfate + 2-oxoglutarate + O2 = 2-ethylhexanal + sulfate + succinate + CO2 + H(+). It carries out the reaction hexyl sulfate + 2-oxoglutarate + O2 = hexanal + sulfate + succinate + CO2 + H(+). The catalysed reaction is pentyl sulfate + 2-oxoglutarate + O2 = pentanal + sulfate + succinate + CO2 + H(+). It catalyses the reaction heptyl sulfate + 2-oxoglutarate + O2 = heptanal + sulfate + succinate + CO2 + H(+). In terms of biological role, alpha-ketoglutarate-dependent sulfate ester dioxygenase, which oxidizes medium-chain alkyl-sulfate esters. Shows preference for 2-ethylhexyl sulfate (2-EHS) in vitro, leading to the formation of succinate and 2-ethylhexanal. Has likely a role in sulfate scavenging in vivo. Functionally, also causes the inactivation of the 2-carboxyquinoxaline Ty38c (an antitubercular compound that inhibits DprE1) via oxidative decarboxylation, using Ty38c instead of alpha-ketoglutarate as a substrate. Is thus responsible for primary resistance of M.tuberculosis to Ty38c in vitro. Overexpression of Rv3406 causes resistance to Ty38c. This chain is Alpha-ketoglutarate-dependent sulfate ester dioxygenase, found in Mycobacterium tuberculosis (strain ATCC 25618 / H37Rv).